Consider the following 510-residue polypeptide: Ribose import ATP-binding protein RbsA 1 (510 aa).

ABC transporter domains are found at residues 20-256 (LEMR…VGRD) and 266-510 (VTLG…TGNA). 52 to 59 (GENGAGKS) is an ATP binding site.

Belongs to the ABC transporter superfamily. Ribose importer (TC 3.A.1.2.1) family. The complex is composed of an ATP-binding protein (RbsA), two transmembrane proteins (RbsC) and a solute-binding protein (RbsB).

The protein localises to the cell inner membrane. It carries out the reaction D-ribose(out) + ATP + H2O = D-ribose(in) + ADP + phosphate + H(+). Functionally, part of the ABC transporter complex RbsABC involved in ribose import. Responsible for energy coupling to the transport system. This is Ribose import ATP-binding protein RbsA 1 from Agrobacterium fabrum (strain C58 / ATCC 33970) (Agrobacterium tumefaciens (strain C58)).